The sequence spans 172 residues: Crossover junction endodeoxyribonuclease RuvC (172 aa).

Active-site residues include D12, E71, and D143. Residues D12, E71, and D143 each coordinate Mg(2+).

It belongs to the RuvC family. In terms of assembly, homodimer which binds Holliday junction (HJ) DNA. The HJ becomes 2-fold symmetrical on binding to RuvC with unstacked arms; it has a different conformation from HJ DNA in complex with RuvA. In the full resolvosome a probable DNA-RuvA(4)-RuvB(12)-RuvC(2) complex forms which resolves the HJ. Mg(2+) is required as a cofactor.

It is found in the cytoplasm. It carries out the reaction Endonucleolytic cleavage at a junction such as a reciprocal single-stranded crossover between two homologous DNA duplexes (Holliday junction).. In terms of biological role, the RuvA-RuvB-RuvC complex processes Holliday junction (HJ) DNA during genetic recombination and DNA repair. Endonuclease that resolves HJ intermediates. Cleaves cruciform DNA by making single-stranded nicks across the HJ at symmetrical positions within the homologous arms, yielding a 5'-phosphate and a 3'-hydroxyl group; requires a central core of homology in the junction. The consensus cleavage sequence is 5'-(A/T)TT(C/G)-3'. Cleavage occurs on the 3'-side of the TT dinucleotide at the point of strand exchange. HJ branch migration catalyzed by RuvA-RuvB allows RuvC to scan DNA until it finds its consensus sequence, where it cleaves and resolves the cruciform DNA. This is Crossover junction endodeoxyribonuclease RuvC from Coxiella burnetii (strain CbuK_Q154) (Coxiella burnetii (strain Q154)).